The following is a 280-amino-acid chain: Alpha-methyl-mannoside-specific lectin (280 aa).

Residues methionine 1–serine 26 form the signal peptide. 2 residues coordinate a carbohydrate: aspartate 114 and glycine 134. The Mn(2+) site is built by glutamate 156 and aspartate 158. Aspartate 158 and phenylalanine 160 together coordinate Ca(2+). Residues serine 165 and asparagine 166 each contribute to the a carbohydrate site. Asparagine 166 and aspartate 169 together coordinate Ca(2+). Mn(2+) contacts are provided by aspartate 169 and histidine 174. Residues glycine 248 and glutamine 250 each contribute to the a carbohydrate site.

Belongs to the leguminous lectin family. Homodimer. Glycosylated.

Functionally, alpha-methyl-D-mannoside-specific lectin. Has hemagglutinating activity towards rabbit erythrocytes. Binds to cytokinins and significantly inhibits physiological effects of cytokinin activity such as cotyledon expansion and delayed leaf senescence. This chain is Alpha-methyl-mannoside-specific lectin, found in Arachis hypogaea (Peanut).